The sequence spans 72 residues: DNA-directed RNA polymerase subunit Rpo10 (72 aa).

Residues Cys7, Cys10, Cys53, and Cys54 each coordinate Zn(2+).

This sequence belongs to the archaeal Rpo10/eukaryotic RPB10 RNA polymerase subunit family. As to quaternary structure, part of the RNA polymerase complex. The cofactor is Zn(2+).

It localises to the cytoplasm. It catalyses the reaction RNA(n) + a ribonucleoside 5'-triphosphate = RNA(n+1) + diphosphate. Functionally, DNA-dependent RNA polymerase (RNAP) catalyzes the transcription of DNA into RNA using the four ribonucleoside triphosphates as substrates. This Thermoplasma volcanium (strain ATCC 51530 / DSM 4299 / JCM 9571 / NBRC 15438 / GSS1) protein is DNA-directed RNA polymerase subunit Rpo10.